A 354-amino-acid polypeptide reads, in one-letter code: Serum paraoxonase/lactonase 3 (354 aa).

Cysteines 42 and 352 form a disulfide. An N-linked (GlcNAc...) asparagine glycan is attached at N50. 2 residues coordinate Ca(2+): E53 and D54. H114 functions as the Proton acceptor in the catalytic mechanism. I116 is a Ca(2+) binding site. Residue S165 is modified to Phosphoserine. Ca(2+) is bound by residues N167, N168, N223, D268, and N269. N269 carries N-linked (GlcNAc...) asparagine glycosylation.

Belongs to the paraoxonase family. Homodimer. It depends on Ca(2+) as a cofactor. In terms of processing, glycosylated. Post-translationally, the signal sequence is not cleaved.

It is found in the secreted. Its subcellular location is the extracellular space. It carries out the reaction a phenyl acetate + H2O = a phenol + acetate + H(+). The enzyme catalyses An aryl dialkyl phosphate + H2O = dialkyl phosphate + an aryl alcohol.. It catalyses the reaction an N-acyl-L-homoserine lactone + H2O = an N-acyl-L-homoserine + H(+). Its function is as follows. Has low activity towards the organophosphate paraxon and aromatic carboxylic acid esters. Rapidly hydrolyzes lactones such as statin prodrugs (e.g. lovastatin). Hydrolyzes aromatic lactones and 5- or 6-member ring lactones with aliphatic substituents but not simple lactones or those with polar substituents. This chain is Serum paraoxonase/lactonase 3 (PON3), found in Oryctolagus cuniculus (Rabbit).